The primary structure comprises 164 residues: GTP-dependent dephospho-CoA kinase (164 aa).

Residues D40, V41, V42, D59, K61, and E113 each contribute to the GTP site.

It belongs to the GTP-dependent DPCK family.

The catalysed reaction is 3'-dephospho-CoA + GTP = GDP + CoA + H(+). The protein operates within cofactor biosynthesis; coenzyme A biosynthesis. In terms of biological role, catalyzes the GTP-dependent phosphorylation of the 3'-hydroxyl group of dephosphocoenzyme A to form coenzyme A (CoA). This is GTP-dependent dephospho-CoA kinase from Sulfolobus acidocaldarius (strain ATCC 33909 / DSM 639 / JCM 8929 / NBRC 15157 / NCIMB 11770).